The primary structure comprises 192 residues: Pyridoxal 5'-phosphate synthase subunit PdxT (192 aa).

L-glutamine is bound at residue Gly53 to Ser55. Residue Cys85 is the Nucleophile of the active site. L-glutamine contacts are provided by residues Arg112 and Ile140–Arg141. Active-site charge relay system residues include His176 and Glu178.

This sequence belongs to the glutaminase PdxT/SNO family. In terms of assembly, in the presence of PdxS, forms a dodecamer of heterodimers. Only shows activity in the heterodimer.

The enzyme catalyses aldehydo-D-ribose 5-phosphate + D-glyceraldehyde 3-phosphate + L-glutamine = pyridoxal 5'-phosphate + L-glutamate + phosphate + 3 H2O + H(+). It catalyses the reaction L-glutamine + H2O = L-glutamate + NH4(+). The protein operates within cofactor biosynthesis; pyridoxal 5'-phosphate biosynthesis. In terms of biological role, catalyzes the hydrolysis of glutamine to glutamate and ammonia as part of the biosynthesis of pyridoxal 5'-phosphate. The resulting ammonia molecule is channeled to the active site of PdxS. This chain is Pyridoxal 5'-phosphate synthase subunit PdxT, found in Natronomonas pharaonis (strain ATCC 35678 / DSM 2160 / CIP 103997 / JCM 8858 / NBRC 14720 / NCIMB 2260 / Gabara) (Halobacterium pharaonis).